A 249-amino-acid polypeptide reads, in one-letter code: NAD kinase (249 aa).

Asp-45 serves as the catalytic Proton acceptor. NAD(+) is bound by residues 45–46 (DG), Arg-50, 110–111 (NE), Asp-138, and 149–154 (SGWGMS).

It belongs to the NAD kinase family. It depends on a divalent metal cation as a cofactor.

It is found in the cytoplasm. The enzyme catalyses NAD(+) + ATP = ADP + NADP(+) + H(+). Its function is as follows. Involved in the regulation of the intracellular balance of NAD and NADP, and is a key enzyme in the biosynthesis of NADP. Catalyzes specifically the phosphorylation on 2'-hydroxyl of the adenosine moiety of NAD to yield NADP. The chain is NAD kinase from Saccharolobus islandicus (strain Y.N.15.51 / Yellowstone #2) (Sulfolobus islandicus).